A 94-amino-acid chain; its full sequence is Viral macrophage inflammatory protein 2 (94 aa).

The N-terminal stretch at Met-1–Ser-20 is a signal peptide. 2 cysteine pairs are disulfide-bonded: Cys-34–Cys-58 and Cys-35–Cys-74.

It belongs to the intercrine beta (chemokine CC) family. As to quaternary structure, monomer. Interacts with human chemokine receptor CXCR4.

It is found in the secreted. Blocks infection by several different human immunodeficiency virus type 1 (HIV-1) strains. This occurs because vMIP-II binds to a wide range of chemokine receptors. May form part of the response to host defenses contributing to virus-induced neoplasia and may have relevance to KSHV and HIV-I interactions. This Human herpesvirus 8 type P (isolate GK18) (HHV-8) protein is Viral macrophage inflammatory protein 2 (ORF K4).